Here is a 288-residue protein sequence, read N- to C-terminus: Elongation factor Ts (288 aa).

Residues Thr79–Val82 form an involved in Mg(2+) ion dislocation from EF-Tu region.

The protein belongs to the EF-Ts family.

The protein localises to the cytoplasm. Associates with the EF-Tu.GDP complex and induces the exchange of GDP to GTP. It remains bound to the aminoacyl-tRNA.EF-Tu.GTP complex up to the GTP hydrolysis stage on the ribosome. This is Elongation factor Ts from Ehrlichia canis (strain Jake).